The sequence spans 551 residues: RCC1 and BTB domain-containing protein 2 (551 aa).

RCC1 repeat units follow at residues 64-115 (NDEI…VLAT), 117-169 (DGEV…VLTS), 171-222 (GEVF…AVVD), 223-274 (TGEV…VLTD), 276-326 (GQIY…AAKS), and 328-382 (GGHV…TVAE). The BTB domain occupies 394-457 (ADLKFLVDGK…LYTDNISLPP (64 aa)).

Its subcellular location is the cytoplasmic vesicle. It is found in the secretory vesicle. The protein localises to the acrosome. In Rattus norvegicus (Rat), this protein is RCC1 and BTB domain-containing protein 2 (Rcbtb2).